A 557-amino-acid chain; its full sequence is Probable protein kinase UbiB (557 aa).

Residues 121–509 (SFDTVPLASA…RKLQTRVVTA (389 aa)) enclose the Protein kinase domain. ATP is bound by residues 127–135 (LASASIAQV) and K154. Catalysis depends on D289, which acts as the Proton acceptor. 2 helical membrane-spanning segments follow: residues 506–526 (VVTA…YGLH) and 535–555 (VPVW…VAWL).

This sequence belongs to the ABC1 family. UbiB subfamily.

Its subcellular location is the cell inner membrane. Its pathway is cofactor biosynthesis; ubiquinone biosynthesis [regulation]. Functionally, is probably a protein kinase regulator of UbiI activity which is involved in aerobic coenzyme Q (ubiquinone) biosynthesis. The chain is Probable protein kinase UbiB from Xanthomonas axonopodis pv. citri (strain 306).